The chain runs to 425 residues: Divalent metal cation transporter MntH (425 aa).

A run of 11 helical transmembrane segments spans residues 30-50 (LLPF…PGNF), 61-81 (GYML…IQSL), 107-127 (IGLW…EFIG), 134-154 (LLFG…SFAI), 167-187 (AGIA…TFFA), 209-231 (VLLA…HSAL), 255-275 (ILIA…VAAA), 294-314 (FGHL…LVAG), 344-364 (FITI…TTAL), 365-385 (VLSQ…LIMF), and 401-421 (ITVV…FLIV).

The protein belongs to the NRAMP family.

It localises to the cell membrane. Functionally, h(+)-stimulated, divalent metal cation uptake system. Involved in manganese uptake. Can probably also transport cadmium, cobalt, copper and zinc, but not iron. May be the predominant transporter of manganese during logarithmic phase growth. This chain is Divalent metal cation transporter MntH, found in Bacillus subtilis (strain 168).